The primary structure comprises 556 residues: Oxygen-dependent choline dehydrogenase (556 aa).

4-33 (DYIIIGAGSAGNVLATRLTEDPNTSVLLLE) lines the FAD pocket. Catalysis depends on His-473, which acts as the Proton acceptor.

Belongs to the GMC oxidoreductase family. Requires FAD as cofactor.

The enzyme catalyses choline + A = betaine aldehyde + AH2. The catalysed reaction is betaine aldehyde + NAD(+) + H2O = glycine betaine + NADH + 2 H(+). It functions in the pathway amine and polyamine biosynthesis; betaine biosynthesis via choline pathway; betaine aldehyde from choline (cytochrome c reductase route): step 1/1. Its function is as follows. Involved in the biosynthesis of the osmoprotectant glycine betaine. Catalyzes the oxidation of choline to betaine aldehyde and betaine aldehyde to glycine betaine at the same rate. This Escherichia coli O139:H28 (strain E24377A / ETEC) protein is Oxygen-dependent choline dehydrogenase.